The following is a 278-amino-acid chain: Bifunctional protein FolD (278 aa).

Residues 163 to 165 (GRS), serine 188, and valine 229 contribute to the NADP(+) site.

Belongs to the tetrahydrofolate dehydrogenase/cyclohydrolase family. As to quaternary structure, homodimer.

It carries out the reaction (6R)-5,10-methylene-5,6,7,8-tetrahydrofolate + NADP(+) = (6R)-5,10-methenyltetrahydrofolate + NADPH. It catalyses the reaction (6R)-5,10-methenyltetrahydrofolate + H2O = (6R)-10-formyltetrahydrofolate + H(+). It participates in one-carbon metabolism; tetrahydrofolate interconversion. Functionally, catalyzes the oxidation of 5,10-methylenetetrahydrofolate to 5,10-methenyltetrahydrofolate and then the hydrolysis of 5,10-methenyltetrahydrofolate to 10-formyltetrahydrofolate. The sequence is that of Bifunctional protein FolD from Exiguobacterium sp. (strain ATCC BAA-1283 / AT1b).